We begin with the raw amino-acid sequence, 457 residues long: tRNA modification GTPase MnmE (457 aa).

R23, E85, and R124 together coordinate (6S)-5-formyl-5,6,7,8-tetrahydrofolate. One can recognise a TrmE-type G domain in the interval 220–376 (GALVVLAGQV…LVTAIRAAVL (157 aa)). N230 serves as a coordination point for K(+). GTP contacts are provided by residues 230–235 (NAGKSS), 249–255 (TDLPGTT), and 274–277 (DTAG). S234 lines the Mg(2+) pocket. The K(+) site is built by T249, L251, and T254. Mg(2+) is bound at residue T255. Residue K457 participates in (6S)-5-formyl-5,6,7,8-tetrahydrofolate binding.

This sequence belongs to the TRAFAC class TrmE-Era-EngA-EngB-Septin-like GTPase superfamily. TrmE GTPase family. In terms of assembly, homodimer. Heterotetramer of two MnmE and two MnmG subunits. K(+) serves as cofactor.

Its subcellular location is the cytoplasm. Its function is as follows. Exhibits a very high intrinsic GTPase hydrolysis rate. Involved in the addition of a carboxymethylaminomethyl (cmnm) group at the wobble position (U34) of certain tRNAs, forming tRNA-cmnm(5)s(2)U34. The sequence is that of tRNA modification GTPase MnmE from Nitratidesulfovibrio vulgaris (strain ATCC 29579 / DSM 644 / CCUG 34227 / NCIMB 8303 / VKM B-1760 / Hildenborough) (Desulfovibrio vulgaris).